We begin with the raw amino-acid sequence, 258 residues long: Acyl-[acyl-carrier-protein]--UDP-N-acetylglucosamine O-acyltransferase (258 aa).

The protein belongs to the transferase hexapeptide repeat family. LpxA subfamily. As to quaternary structure, homotrimer.

Its subcellular location is the cytoplasm. It catalyses the reaction a (3R)-hydroxyacyl-[ACP] + UDP-N-acetyl-alpha-D-glucosamine = a UDP-3-O-[(3R)-3-hydroxyacyl]-N-acetyl-alpha-D-glucosamine + holo-[ACP]. It functions in the pathway glycolipid biosynthesis; lipid IV(A) biosynthesis; lipid IV(A) from (3R)-3-hydroxytetradecanoyl-[acyl-carrier-protein] and UDP-N-acetyl-alpha-D-glucosamine: step 1/6. Involved in the biosynthesis of lipid A, a phosphorylated glycolipid that anchors the lipopolysaccharide to the outer membrane of the cell. The chain is Acyl-[acyl-carrier-protein]--UDP-N-acetylglucosamine O-acyltransferase from Saccharophagus degradans (strain 2-40 / ATCC 43961 / DSM 17024).